The sequence spans 40 residues: RapK inhibitor (40 aa).

Propeptides lie at residues 1 to 34 and G40; that span reads MKKLVLCVSILAVILSGVALTQLSTDSPSNIQVA.

Belongs to the Phr family. Post-translationally, contains a predicted signal peptide cleavage site in the N-terminal region, however the propeptide is probably only subject to processing events at the ends of the mature peptide.

The protein resides in the secreted. The protein localises to the cytoplasm. Its function is as follows. Signaling molecule involved in the regulation of genetic competence development. Secreted during production, but the mature peptide acts intracellularly, indicating that it needs to be imported into the cell to function. Stimulates expression of the genes controlled by ComA, a transcriptional factor that regulates the development of genetic competence. Acts by inhibiting RapK, which regulates the activity of ComA. The protein is RapK inhibitor (phrK) of Bacillus subtilis (strain 168).